The following is a 139-amino-acid chain: uncharacterized protein (139 aa).

One can recognise an HIT domain in the interval 5 to 114 (IFCKIINKEL…IPRFKNDGFG (110 aa)). The Histidine triad motif signature appears at 99–103 (HTHFH).

This is an uncharacterized protein from Borreliella burgdorferi (strain ATCC 35210 / DSM 4680 / CIP 102532 / B31) (Borrelia burgdorferi).